We begin with the raw amino-acid sequence, 396 residues long: L-lactate dehydrogenase (396 aa).

The FMN hydroxy acid dehydrogenase domain maps to M1–G380. Y24 lines the substrate pocket. The FMN site is built by S106 and Q127. Y129 provides a ligand contact to substrate. FMN is bound at residue T155. R164 lines the substrate pocket. An FMN-binding site is contributed by K251. H275 acts as the Proton acceptor in catalysis. Residue R278 coordinates substrate. D306 to R330 contributes to the FMN binding site.

The protein belongs to the FMN-dependent alpha-hydroxy acid dehydrogenase family. FMN serves as cofactor.

The protein localises to the cell inner membrane. The catalysed reaction is (S)-lactate + A = pyruvate + AH2. Its function is as follows. Catalyzes the conversion of L-lactate to pyruvate. Is coupled to the respiratory chain. The polypeptide is L-lactate dehydrogenase (Escherichia coli O45:K1 (strain S88 / ExPEC)).